The primary structure comprises 89 residues: DNA/RNA-binding protein Alba 1 (89 aa).

It belongs to the histone-like Alba family.

It is found in the cytoplasm. Its subcellular location is the chromosome. Its function is as follows. Binds double-stranded DNA tightly but without sequence specificity. Involved in DNA compaction. This chain is DNA/RNA-binding protein Alba 1, found in Archaeoglobus fulgidus (strain ATCC 49558 / DSM 4304 / JCM 9628 / NBRC 100126 / VC-16).